The chain runs to 126 residues: MSALDDSIRVEVKTEYIEQQSSPEDQKYLFSYTITIINLGEQAAKLETRHWIITDANGKISEVQGAGVVGETPTIPPNTAYQYTSGTVLDTPLGIMYGTYGMVSESGEHFKATIKPFRLALPGLLH.

In terms of domain architecture, ApaG spans 2–126; that stretch reads SALDDSIRVE…FRLALPGLLH (125 aa).

In Shewanella sp. (strain ANA-3), this protein is Protein ApaG.